The sequence spans 692 residues: MELLPLWLCLGFHFLTVGWRNRSGTATAASQGVCKLVGGAADCRGQSLASVPSSLPPHARMLTLDANPLKTLWNHSLQPYPLLESLSLHSCHLERISRGAFQEQGHLRSLVLGDNCLSENYEETAAALHALPGLRRLDLSGNALTEDMAALMLQNLSSLRSVSLAGNTIMRLDDSVFEGLERLRELDLQRNYIFEIEGGAFDGLAELRHLNLAFNNLPCIVDFGLTRLRVLNVSYNVLEWFLATGGEAAFELETLDLSHNQLLFFPLLPQYSKLRTLLLRDNNMGFYRDLYNTSSPREMVAQFLLVDGNVTNITTVSLWEEFSSSDLADLRFLDMSQNQFQYLPDGFLRKMPSLSHLNLHQNCLMTLHIREHEPPGALTELDLSHNQLSELHLAPGLASCLGSLRLFNLSSNQLLGVPPGLFANARNITTLDMSHNQISLCPLPAASDRVGPPSCVDFRNMASLRSLSLEGCGLGALPDCPFQGTSLTYLDLSSNWGVLNGSLAPLQDVAPMLQVLSLRNMGLHSSFMALDFSGFGNLRDLDLSGNCLTTFPRFGGSLALETLDLRRNSLTALPQKAVSEQLSRGLRTIYLSQNPYDCCGVDGWGALQHGQTVADWAMVTCNLSSKIIRVTELPGGVPRDCKWERLDLGLLYLVLILPSCLTLLVACTVIVLTFKKPLLQVIKSRCHWSSVY.

A signal peptide spans 1–18 (MELLPLWLCLGFHFLTVG). Over 19–650 (WRNRSGTATA…CKWERLDLGL (632 aa)) the chain is Extracellular. Asparagine 21 carries N-linked (GlcNAc...) asparagine glycosylation. An LRRNT domain is found at 29 to 56 (ASQGVCKLVGGAADCRGQSLASVPSSLP). LRR repeat units follow at residues 58 to 79 (HARMLTLDANPLKTLWNHSLQP), 82 to 103 (LLESLSLHSCHLERISRGAFQE), 106 to 127 (HLRSLVLGDNCLSENYEETAAA), 133 to 155 (GLRRLDLSGNALTEDMAALMLQN), 158 to 179 (SLRSVSLAGNTIMRLDDSVFEG), 182 to 203 (RLRELDLQRNYIFEIEGGAFDG), 206 to 227 (ELRHLNLAFNNLPCIVDFGLTR), 228 to 239 (LRVLNVSYNVLE), 251 to 272 (ELETLDLSHNQLLFFPLLPQYS), and 273 to 294 (KLRTLLLRDNNMGFYRDLYNTS). N-linked (GlcNAc...) asparagine glycosylation is present at asparagine 74. N-linked (GlcNAc...) asparagine glycosylation occurs at asparagine 155. The N-linked (GlcNAc...) asparagine glycan is linked to asparagine 232. N-linked (GlcNAc...) asparagine glycosylation is found at asparagine 292, asparagine 309, and asparagine 312. LRR repeat units follow at residues 329–350 (DLRFLDMSQNQFQYLPDGFLRK), 353–374 (SLSHLNLHQNCLMTLHIREHEP), 377–398 (ALTELDLSHNQLSELHLAPGLA), 403–424 (SLRLFNLSSNQLLGVPPGLFAN), 427–447 (NITTLDMSHNQISLCPLPAAS), 463–484 (SLRSLSLEGCGLGALPDCPFQG), 486–507 (SLTYLDLSSNWGVLNGSLAPLQ), 512–534 (MLQVLSLRNMGLHSSFMALDFSG), 537–558 (NLRDLDLSGNCLTTFPRFGGSL), 559–580 (ALETLDLRRNSLTALPQKAVSE), and 585–594 (GLRTIYLSQN). N-linked (GlcNAc...) asparagine glycans are attached at residues asparagine 408 and asparagine 427. The N-linked (GlcNAc...) asparagine glycan is linked to asparagine 500. The LRRCT domain maps to 595-643 (PYDCCGVDGWGALQHGQTVADWAMVTCNLSSKIIRVTELPGGVPRDCKW). Residue asparagine 622 is glycosylated (N-linked (GlcNAc...) asparagine). The helical transmembrane segment at 651-671 (LYLVLILPSCLTLLVACTVIV) threads the bilayer. Residues 672–692 (LTFKKPLLQVIKSRCHWSSVY) are Cytoplasmic-facing.

It belongs to the LRRC32/LRRC33 family. Interacts with TGFB1; associates via disulfide bonds with the Latency-associated peptide chain (LAP) regulatory chain of TGFB1, leading to regulate activation of TGF-beta-1. Interacts (via LRR repeats) with TLR2, TLR3, TLR4, TLR9 and probably other Toll-like receptors. Interacts with CYBB/NOX2; the interaction is direct. As to expression, mainly expressed in cells of hematopoietic origin. Highly expressed in bone marrow, thymus, liver, lung, intestine and spleen. In the brain, highly expressed in microglia.

The protein localises to the cell membrane. It localises to the endoplasmic reticulum membrane. In terms of biological role, key regulator of transforming growth factor beta-1 (TGFB1) specifically required for microglia function in the nervous system. Required for activation of latent TGF-beta-1 in macrophages and microglia: associates specifically via disulfide bonds with the Latency-associated peptide (LAP), which is the regulatory chain of TGFB1, and regulates integrin-dependent activation of TGF-beta-1. TGF-beta-1 activation mediated by LRRC33/NRROS is highly localized: there is little spreading of TGF-beta-1 activated from one microglial cell to neighboring microglia, suggesting the existence of localized and selective activation of TGF-beta-1 by LRRC33/NRROS. Indirectly plays a role in Toll-like receptor (TLR) signaling: ability to inhibit TLR-mediated NF-kappa-B activation and cytokine production is probably a consequence of its role in TGF-beta-1 signaling. This is Transforming growth factor beta activator LRRC33 from Homo sapiens (Human).